The chain runs to 170 residues: Large ribosomal subunit protein bL9 (170 aa).

The tract at residues 149–170 (DGDNEDLDEDNAADENEDYSEE) is disordered.

Belongs to the bacterial ribosomal protein bL9 family.

Its function is as follows. Binds to the 23S rRNA. The sequence is that of Large ribosomal subunit protein bL9 from Psychrobacter cryohalolentis (strain ATCC BAA-1226 / DSM 17306 / VKM B-2378 / K5).